A 371-amino-acid chain; its full sequence is 4-hydroxy-3-methylbut-2-en-1-yl diphosphate synthase (flavodoxin) (371 aa).

4 residues coordinate [4Fe-4S] cluster: C270, C273, C305, and E312.

This sequence belongs to the IspG family. It depends on [4Fe-4S] cluster as a cofactor.

It carries out the reaction (2E)-4-hydroxy-3-methylbut-2-enyl diphosphate + oxidized [flavodoxin] + H2O + 2 H(+) = 2-C-methyl-D-erythritol 2,4-cyclic diphosphate + reduced [flavodoxin]. It functions in the pathway isoprenoid biosynthesis; isopentenyl diphosphate biosynthesis via DXP pathway; isopentenyl diphosphate from 1-deoxy-D-xylulose 5-phosphate: step 5/6. Functionally, converts 2C-methyl-D-erythritol 2,4-cyclodiphosphate (ME-2,4cPP) into 1-hydroxy-2-methyl-2-(E)-butenyl 4-diphosphate. The chain is 4-hydroxy-3-methylbut-2-en-1-yl diphosphate synthase (flavodoxin) from Shewanella sediminis (strain HAW-EB3).